Reading from the N-terminus, the 163-residue chain is MAKDSSFDIVSKVELPEVTNAINIALKEIQNRYDFKGSKSDIKLEKEVLVLTSDDEFKLDQVKDVLISKLVKRNVPIKNLDYGKVEAATGNTVRQRATLQQGIDKDNAKKINNIIKEMKLKVKTQVQDDQVRVTAKSRDDLQAVIAAVRSADLPIDVQFINYR.

The protein belongs to the YajQ family.

Functionally, nucleotide-binding protein. This is Nucleotide-binding protein BCG9842_B4128 from Bacillus cereus (strain G9842).